The sequence spans 205 residues: Inactive ribonuclease-like protein 9 (205 aa).

The N-terminal stretch at 1–26 (MMRTLITTHPLPLLLLPQQLLQPVQF) is a signal peptide. Disulfide bonds link cysteine 98–cysteine 153, cysteine 116–cysteine 168, and cysteine 123–cysteine 130. N-linked (GlcNAc...) asparagine glycans are attached at residues asparagine 131 and asparagine 143.

This sequence belongs to the pancreatic ribonuclease family.

Its subcellular location is the secreted. In terms of biological role, does not exhibit any ribonuclease activity. The chain is Inactive ribonuclease-like protein 9 (RNASE9) from Pan troglodytes (Chimpanzee).